We begin with the raw amino-acid sequence, 869 residues long: Sodium-dependent phosphate transporter (869 aa).

At M1–E18 the chain is on the extracellular side. The chain crosses the membrane as a helical span at residues Y19–A39. Topologically, residues N40–A54 are cytoplasmic. The helical transmembrane segment at I55–L75 threads the bilayer. Over G76–P97 the chain is Extracellular. A helical membrane pass occupies residues S98–A118. Topologically, residues N119 to H120 are cytoplasmic. The helical transmembrane segment at L121–A141 threads the bilayer. At S142–A154 the chain is on the extracellular side. The helical transmembrane segment at F155 to F175 threads the bilayer. The Cytoplasmic portion of the chain corresponds to V176–L196. Residues W197–F217 traverse the membrane as a helical segment. Over E218–T250 the chain is Extracellular. A helical transmembrane segment spans residues A251–Y271. Over R272–S720 the chain is Cytoplasmic. Disordered stretches follow at residues K286 to L312, A374 to V401, and S453 to R571. A compositionally biased stretch (low complexity) spans S457 to P481. Residues R482 to P491 show a composition bias toward pro residues. Over residues R492–S509 the composition is skewed to low complexity. The span at P556–R571 shows a compositional bias: basic and acidic residues. A helical membrane pass occupies residues P721 to Y741. Over R742 to G759 the chain is Extracellular. Residues F760 to L780 traverse the membrane as a helical segment. Residues S781–G837 lie on the Cytoplasmic side of the membrane. The chain crosses the membrane as a helical span at residues G838 to F858. Residues S859–S869 are Extracellular-facing.

The protein belongs to the inorganic phosphate transporter (PiT) (TC 2.A.20) family.

It is found in the cell membrane. Its subcellular location is the vacuole membrane. It localises to the cytoplasmic vesicle membrane. It carries out the reaction 2 Na(+)(out) + phosphate(out) = 2 Na(+)(in) + phosphate(in). Its function is as follows. Sodium-phosphate symporter which preferentially transports the monovalent form of phosphate with a stoichiometry of two sodium ions per phosphate ion. Plays a role in stabilizing the cytosolic pH and osmoregulation. May be required for optimal virulence of parasites in vivo. This chain is Sodium-dependent phosphate transporter, found in Toxoplasma gondii (strain ATCC 50861 / VEG).